Here is a 58-residue protein sequence, read N- to C-terminus: MHSRFVKVKCPDCEHEQVIFDHPSTIVKCIICGRTVAEPTGGKGNIKAEIIEYVDQIE.

Residues Cys-10, Cys-13, Cys-29, and Cys-32 each coordinate Zn(2+). The segment at 10-32 (CPDCEHEQVIFDHPSTIVKCIIC) adopts a C4-type zinc-finger fold.

This sequence belongs to the eukaryotic ribosomal protein eS27 family. As to quaternary structure, part of the 30S ribosomal subunit. Zn(2+) serves as cofactor.

In Archaeoglobus fulgidus (strain ATCC 49558 / DSM 4304 / JCM 9628 / NBRC 100126 / VC-16), this protein is Small ribosomal subunit protein eS27.